Reading from the N-terminus, the 208-residue chain is N-(5'-phosphoribosyl)anthranilate isomerase (208 aa).

The protein belongs to the TrpF family.

The enzyme catalyses N-(5-phospho-beta-D-ribosyl)anthranilate = 1-(2-carboxyphenylamino)-1-deoxy-D-ribulose 5-phosphate. The protein operates within amino-acid biosynthesis; L-tryptophan biosynthesis; L-tryptophan from chorismate: step 3/5. In Nitrosomonas eutropha (strain DSM 101675 / C91 / Nm57), this protein is N-(5'-phosphoribosyl)anthranilate isomerase.